Consider the following 116-residue polypeptide: Small ribosomal subunit protein bS16 (116 aa).

Positions 88 to 116 (RNNPKAAVPGKRMAELAKKKADRAAASAE) are disordered. Residues 99–110 (RMAELAKKKADR) show a composition bias toward basic and acidic residues.

It belongs to the bacterial ribosomal protein bS16 family.

The polypeptide is Small ribosomal subunit protein bS16 (Cereibacter sphaeroides (strain ATCC 17029 / ATH 2.4.9) (Rhodobacter sphaeroides)).